A 198-amino-acid chain; its full sequence is Mediator of RNA polymerase II transcription subunit 20 (198 aa).

The protein belongs to the Mediator complex subunit 20 family. As to quaternary structure, component of the Mediator complex.

It is found in the nucleus. Its function is as follows. Component of the Mediator complex, a coactivator involved in the regulated transcription of nearly all RNA polymerase II-dependent genes. Mediator functions as a bridge to convey information from gene-specific regulatory proteins to the basal RNA polymerase II transcription machinery. Mediator is recruited to promoters by direct interactions with regulatory proteins and serves as a scaffold for the assembly of a functional preinitiation complex with RNA polymerase II and the general transcription factors. In Caenorhabditis briggsae, this protein is Mediator of RNA polymerase II transcription subunit 20 (mdt-20).